A 156-amino-acid polypeptide reads, in one-letter code: Small ribosomal subunit protein uS7 (156 aa).

This sequence belongs to the universal ribosomal protein uS7 family. As to quaternary structure, part of the 30S ribosomal subunit. Contacts proteins S9 and S11.

In terms of biological role, one of the primary rRNA binding proteins, it binds directly to 16S rRNA where it nucleates assembly of the head domain of the 30S subunit. Is located at the subunit interface close to the decoding center, probably blocks exit of the E-site tRNA. The protein is Small ribosomal subunit protein uS7 of Mycoplasmopsis pulmonis (strain UAB CTIP) (Mycoplasma pulmonis).